We begin with the raw amino-acid sequence, 94 residues long: Co-chaperonin GroES (94 aa).

The protein belongs to the GroES chaperonin family. Heptamer of 7 subunits arranged in a ring. Interacts with the chaperonin GroEL.

It is found in the cytoplasm. In terms of biological role, together with the chaperonin GroEL, plays an essential role in assisting protein folding. The GroEL-GroES system forms a nano-cage that allows encapsulation of the non-native substrate proteins and provides a physical environment optimized to promote and accelerate protein folding. GroES binds to the apical surface of the GroEL ring, thereby capping the opening of the GroEL channel. This is Co-chaperonin GroES from Halothermothrix orenii (strain H 168 / OCM 544 / DSM 9562).